The following is a 238-amino-acid chain: Large ribosomal subunit protein uL2 (238 aa).

The span at 1 to 11 shows a compositional bias: polar residues; sequence MGKRLISQNRG. 2 disordered regions span residues 1–22 and 202–223; these read MGKRLISQNRGRGTPTYRAPSH and FGGGAWKHPGKPTTVSRNAPPG.

This sequence belongs to the universal ribosomal protein uL2 family. In terms of assembly, part of the 50S ribosomal subunit. Forms a bridge to the 30S subunit in the 70S ribosome.

In terms of biological role, one of the primary rRNA binding proteins. Required for association of the 30S and 50S subunits to form the 70S ribosome, for tRNA binding and peptide bond formation. It has been suggested to have peptidyltransferase activity; this is somewhat controversial. Makes several contacts with the 16S rRNA in the 70S ribosome. The polypeptide is Large ribosomal subunit protein uL2 (Methanosarcina acetivorans (strain ATCC 35395 / DSM 2834 / JCM 12185 / C2A)).